The following is a 33-amino-acid chain: Brevinin-2PTd (33 aa).

Cysteines 27 and 33 form a disulfide.

Expressed by the skin glands.

Its subcellular location is the secreted. Its function is as follows. Has antibacterial activity against the Gram-positive bacterium S.aureus ATCC 25923 and the Gram-negative bacterium E.coli ATCC 25726. The polypeptide is Brevinin-2PTd (Pulchrana picturata (Malaysian fire frog)).